Reading from the N-terminus, the 266-residue chain is Phosphate import ATP-binding protein PstB 2 (266 aa).

One can recognise an ABC transporter domain in the interval 13-252 (LEAQGVNVYY…GPTEEIFQNP (240 aa)). ATP is bound at residue 45–52 (GPSGCGKS).

Belongs to the ABC transporter superfamily. Phosphate importer (TC 3.A.1.7) family. In terms of assembly, the complex is composed of two ATP-binding proteins (PstB), two transmembrane proteins (PstC and PstA) and a solute-binding protein (PstS).

The protein resides in the cell inner membrane. The enzyme catalyses phosphate(out) + ATP + H2O = ADP + 2 phosphate(in) + H(+). Its function is as follows. Part of the ABC transporter complex PstSACB involved in phosphate import. Responsible for energy coupling to the transport system. The sequence is that of Phosphate import ATP-binding protein PstB 2 from Synechocystis sp. (strain ATCC 27184 / PCC 6803 / Kazusa).